A 464-amino-acid chain; its full sequence is GTPase Der (464 aa).

2 consecutive EngA-type G domains span residues 3 to 166 and 177 to 350; these read ALVA…PVLE and LQFA…QSAN. GTP is bound by residues 9-16, 56-60, 118-121, 183-190, 230-234, and 295-298; these read GRPNVGKS, DTGGV, NKAE, DTAGI, and NKWD. The KH-like domain maps to 351 to 435; that stretch reads SHLPTGELNR…PIALEFRTVK (85 aa).

It belongs to the TRAFAC class TrmE-Era-EngA-EngB-Septin-like GTPase superfamily. EngA (Der) GTPase family. As to quaternary structure, associates with the 50S ribosomal subunit.

Its function is as follows. GTPase that plays an essential role in the late steps of ribosome biogenesis. In Nitrosococcus oceani (strain ATCC 19707 / BCRC 17464 / JCM 30415 / NCIMB 11848 / C-107), this protein is GTPase Der.